The following is a 425-amino-acid chain: Serine hydroxymethyltransferase 2 (425 aa).

(6S)-5,6,7,8-tetrahydrofolate-binding positions include Leu121 and 125–127; that span reads GHL. Position 230 is an N6-(pyridoxal phosphate)lysine (Lys230).

The protein belongs to the SHMT family. As to quaternary structure, homodimer. It depends on pyridoxal 5'-phosphate as a cofactor.

The protein resides in the cytoplasm. The catalysed reaction is (6R)-5,10-methylene-5,6,7,8-tetrahydrofolate + glycine + H2O = (6S)-5,6,7,8-tetrahydrofolate + L-serine. Its pathway is one-carbon metabolism; tetrahydrofolate interconversion. The protein operates within amino-acid biosynthesis; glycine biosynthesis; glycine from L-serine: step 1/1. Catalyzes the reversible interconversion of serine and glycine with tetrahydrofolate (THF) serving as the one-carbon carrier. This reaction serves as the major source of one-carbon groups required for the biosynthesis of purines, thymidylate, methionine, and other important biomolecules. Also exhibits THF-independent aldolase activity toward beta-hydroxyamino acids, producing glycine and aldehydes, via a retro-aldol mechanism. The sequence is that of Serine hydroxymethyltransferase 2 from Mycobacterium bovis (strain ATCC BAA-935 / AF2122/97).